The sequence spans 218 residues: Ubiquitin-conjugating enzyme E2-24 kDa (218 aa).

The region spanning S3–T148 is the UBC core domain. C85 functions as the Glycyl thioester intermediate in the catalytic mechanism. The tract at residues Q154 to Q218 is disordered. Acidic residues-rich tracts occupy residues N160–D183 and D192–Q218.

This sequence belongs to the ubiquitin-conjugating enzyme family.

It is found in the cytoplasm. It catalyses the reaction S-ubiquitinyl-[E1 ubiquitin-activating enzyme]-L-cysteine + [E2 ubiquitin-conjugating enzyme]-L-cysteine = [E1 ubiquitin-activating enzyme]-L-cysteine + S-ubiquitinyl-[E2 ubiquitin-conjugating enzyme]-L-cysteine.. The protein operates within protein modification; protein ubiquitination. Functionally, catalyzes the covalent attachment of ubiquitin to other proteins. Required for the adaptation to the presence of glucose in the growth medium; mediates the degradation of enzymes involved in gluconeogenesis when cells are shifted to glucose-containing medium. Required for proteasome-dependent catabolite degradation of fructose-1,6-bisphosphatase (FBP1). The polypeptide is Ubiquitin-conjugating enzyme E2-24 kDa (UBC8) (Saccharomyces cerevisiae (strain ATCC 204508 / S288c) (Baker's yeast)).